The following is a 252-amino-acid chain: uncharacterized protein (252 aa).

Tandem repeats lie at residues 68–82 (TYNQ…DLVD), 83–97 (TYNQ…DLVD), 98–112 (TYNQ…DLVD), 113–127 (TYNQ…DLVD), 128–142 (TYNQ…DLVD), 143–157 (TYNQ…DLVD), 158–172 (TYNQ…DLID), 173–187 (TYNQ…DLVD), 188–202 (TYNQ…DLVD), and 203–217 (TYNQ…DLVD). The 13 X 15 AA tandem repeats stretch occupies residues 68-246 (TYNQSQNVCP…LIDTYNQSQN (179 aa)). One copy of the 11; truncated repeat lies at 218-230 (TYNQSQNVCPQDL). Residues 231–239 (NVYTQDLID) form a 12; truncated repeat. The 13; truncated repeat unit spans residues 240–246 (TYNQSQN).

Functionally, a protein probably derived from this gene is found in cuboidal crystalline inclusions, but is not toxic even when coexpressed with upstream ORF1. The protein runs anomalously as a 50 kDa band in gels. This is an uncharacterized protein from Bacillus thuringiensis subsp. kurstaki.